The sequence spans 124 residues: Small ribosomal subunit protein uS12 (124 aa).

3-methylthioaspartic acid is present on Asp-89.

Belongs to the universal ribosomal protein uS12 family. Part of the 30S ribosomal subunit. Contacts proteins S8 and S17. May interact with IF1 in the 30S initiation complex.

With S4 and S5 plays an important role in translational accuracy. Functionally, interacts with and stabilizes bases of the 16S rRNA that are involved in tRNA selection in the A site and with the mRNA backbone. Located at the interface of the 30S and 50S subunits, it traverses the body of the 30S subunit contacting proteins on the other side and probably holding the rRNA structure together. The combined cluster of proteins S8, S12 and S17 appears to hold together the shoulder and platform of the 30S subunit. The protein is Small ribosomal subunit protein uS12 of Klebsiella pneumoniae (strain 342).